The primary structure comprises 257 residues: Dihydroorotate dehydrogenase B (NAD(+)), electron transfer subunit (257 aa).

One can recognise an FAD-binding FR-type domain in the interval 2 to 102 (IGRERMTVAS…LGPLGNGFPL (101 aa)). Residues 53 to 56 (RPLS), 70 to 72 (IYR), and 77 to 78 (GT) contribute to the FAD site. [2Fe-2S] cluster-binding residues include Cys-221, Cys-226, Cys-229, and Cys-244.

The protein belongs to the PyrK family. Heterotetramer of 2 PyrK and 2 PyrD type B subunits. It depends on [2Fe-2S] cluster as a cofactor. FAD serves as cofactor.

Its pathway is pyrimidine metabolism; UMP biosynthesis via de novo pathway; orotate from (S)-dihydroorotate (NAD(+) route): step 1/1. Responsible for channeling the electrons from the oxidation of dihydroorotate from the FMN redox center in the PyrD type B subunit to the ultimate electron acceptor NAD(+). In Bacillus caldolyticus, this protein is Dihydroorotate dehydrogenase B (NAD(+)), electron transfer subunit.